The chain runs to 543 residues: Chaperonin GroEL (543 aa).

Residues 29–32 (TIGP), 86–90 (DGTTT), G413, 478–480 (NAA), and D494 contribute to the ATP site.

The protein belongs to the chaperonin (HSP60) family. As to quaternary structure, forms a cylinder of 14 subunits composed of two heptameric rings stacked back-to-back. Interacts with the co-chaperonin GroES.

Its subcellular location is the cytoplasm. It catalyses the reaction ATP + H2O + a folded polypeptide = ADP + phosphate + an unfolded polypeptide.. In terms of biological role, together with its co-chaperonin GroES, plays an essential role in assisting protein folding. The GroEL-GroES system forms a nano-cage that allows encapsulation of the non-native substrate proteins and provides a physical environment optimized to promote and accelerate protein folding. This is Chaperonin GroEL from Limosilactobacillus fermentum (strain NBRC 3956 / LMG 18251) (Lactobacillus fermentum).